A 458-amino-acid polypeptide reads, in one-letter code: MTVARWLRLWERGQAMLHVTWGSKVRLWSLVPALLGTPRALSSLENRMGVYRKMWNPKEPCDWAQQYRERFIPFSKEQLLRLLIQEFHSSPAERAALEAFSAHVDFCTLFHYHQLLARLQALYDPINPDRETLDQPSLTDPERLSSEKDVLQALRPLLAQANFSPLSEDALAYALVVHHPQDEVQVTINLDQYIYIQFWALGQRVGQMPHKSSVGSKRGFFRKLPPVERRYFKRVVLAARTKGGHLVLKSFKDTPLEGLEQLLPELKVRTPVLQRALLNLMLVVSGVMIFVNVGMVILSDLKMATSLLLLLFAAFMGVKASKVFGQRRSAQALELAHVLYYRSTSNNSELLSALALRAQEEHIKEALLAHSFLARRPGGSQGKPEETSRWLQSEVESWLLAQSGCDVTFNGPRALAHLQALTPSLGLFPLPELPQLDPMVLGTPEATQAALGSSYPSP.

Helical transmembrane passes span 277–297 (LLNL…GMVI) and 298–318 (LSDL…FMGV). Phosphoserine is present on serine 329.

The protein localises to the membrane. The chain is Transmembrane protein 143 (Tmem143) from Mus musculus (Mouse).